The primary structure comprises 300 residues: Ribosomal RNA small subunit methyltransferase H (300 aa).

S-adenosyl-L-methionine is bound by residues 46-48, D65, F92, D107, and Q114; that span reads GGH.

The protein belongs to the methyltransferase superfamily. RsmH family.

Its subcellular location is the cytoplasm. The catalysed reaction is cytidine(1402) in 16S rRNA + S-adenosyl-L-methionine = N(4)-methylcytidine(1402) in 16S rRNA + S-adenosyl-L-homocysteine + H(+). Its function is as follows. Specifically methylates the N4 position of cytidine in position 1402 (C1402) of 16S rRNA. The sequence is that of Ribosomal RNA small subunit methyltransferase H from Prochlorococcus marinus subsp. pastoris (strain CCMP1986 / NIES-2087 / MED4).